The sequence spans 334 residues: Petrobactin import system permease protein FatD (334 aa).

Transmembrane regions (helical) follow at residues 24–44 (FIIAIIVVIILGIISLFTGVY), 64–84 (TVALMLTGAAMAMAGLVMQLI), 98–118 (IEWSSLGLLFVYLLFPAPTLV), 119–139 (QRMTGAIIFSFIGTMIFFLFL), 152–172 (IIGLMLGAVISAVSTFLGLLF), 197–217 (LWLIVIVTLLIFMYANRLTLA), 234–254 (IVLFGTALISVAVGIVAAVIG), 277–297 (SNLPWVCVIGMGTITACDIIS), and 304–324 (FELPVSLILASVGAVVFITIL).

The protein belongs to the binding-protein-dependent transport system permease family. FecCD subfamily. In terms of assembly, the complex is composed of two ATP-binding proteins (FatE), two transmembrane proteins (FatC and FatD) and a solute-binding protein (FpuA).

The protein localises to the cell membrane. Functionally, part of an ABC transporter complex involved in ferric-petrobactin uptake. Probably responsible for the translocation of the substrate across the membrane. The polypeptide is Petrobactin import system permease protein FatD (Bacillus anthracis).